A 102-amino-acid chain; its full sequence is RNA-binding protein Hfq (102 aa).

Residues 9 to 68 (DPFVNALRRERVPVSIYLVNGIKLQGQIESFDQFVILLKNTVSQMVYKHAISTVVPSRPV) enclose the Sm domain. A disordered region spans residues 63-102 (VPSRPVSHHSNNAGGGASNNYHHGSNAQGSTAQQDSEETE). Low complexity predominate over residues 70–88 (HHSNNAGGGASNNYHHGSN).

This sequence belongs to the Hfq family. Homohexamer.

Its function is as follows. RNA chaperone that binds small regulatory RNA (sRNAs) and mRNAs to facilitate mRNA translational regulation in response to envelope stress, environmental stress and changes in metabolite concentrations. Also binds with high specificity to tRNAs. The sequence is that of RNA-binding protein Hfq from Salmonella heidelberg (strain SL476).